We begin with the raw amino-acid sequence, 372 residues long: Geranylgeranyl pyrophosphate synthase 4 (372 aa).

The signal sequence occupies residues M1 to T22. The isopentenyl diphosphate site is built by K121, R124, and H153. Mg(2+) is bound by residues D160 and D166. A dimethylallyl diphosphate-binding site is contributed by R171. R172 lines the isopentenyl diphosphate pocket. 5 residues coordinate dimethylallyl diphosphate: K257, T258, Q295, K312, and K322.

Belongs to the FPP/GGPP synthase family. In terms of assembly, monomer. The cofactor is Mg(2+). As to expression, faintly expressed in flowers. Expressed in roots and siliques.

Its subcellular location is the endoplasmic reticulum. The enzyme catalyses isopentenyl diphosphate + dimethylallyl diphosphate = (2E)-geranyl diphosphate + diphosphate. It catalyses the reaction isopentenyl diphosphate + (2E)-geranyl diphosphate = (2E,6E)-farnesyl diphosphate + diphosphate. The catalysed reaction is isopentenyl diphosphate + (2E,6E)-farnesyl diphosphate = (2E,6E,10E)-geranylgeranyl diphosphate + diphosphate. It participates in isoprenoid biosynthesis; farnesyl diphosphate biosynthesis; farnesyl diphosphate from geranyl diphosphate and isopentenyl diphosphate: step 1/1. The protein operates within isoprenoid biosynthesis; geranyl diphosphate biosynthesis; geranyl diphosphate from dimethylallyl diphosphate and isopentenyl diphosphate: step 1/1. It functions in the pathway isoprenoid biosynthesis; geranylgeranyl diphosphate biosynthesis; geranylgeranyl diphosphate from farnesyl diphosphate and isopentenyl diphosphate: step 1/1. Functionally, catalyzes the trans-addition of the three molecules of isopentenyl diphosphate (IPP) onto dimethylallyl diphosphate (DMAPP) to form geranylgeranyl diphosphate. This Arabidopsis thaliana (Mouse-ear cress) protein is Geranylgeranyl pyrophosphate synthase 4.